The sequence spans 570 residues: Interleukin-1 receptor accessory protein (570 aa).

An N-terminal signal peptide occupies residues M1–A20. 3 Ig-like C2-type domains span residues S21–P128, P141–T230, and P243–K348. The Extracellular segment spans residues S21–T367. 5 cysteine pairs are disulfide-bonded: C24/C122, C47/C114, C137/C181, C160/C212, and C266/C332. N-linked (GlcNAc...) asparagine glycosylation is present at N57. Residues I69 to F85 are essential for interaction with PTPRD. 6 N-linked (GlcNAc...) asparagine glycosylation sites follow: N107, N111, N118, N157, N196, and N209. The chain crosses the membrane as a helical span at residues V368–F388. Over Y389–V570 the chain is Cytoplasmic. The region spanning K403–M546 is the TIR domain. E482 is an active-site residue. The tract at residues K550 to V570 is disordered. The segment covering R553–V570 has biased composition (polar residues). S557 bears the Phosphoserine mark.

The protein belongs to the interleukin-1 receptor family. As to quaternary structure, the interleukin-36 receptor complex is a heterodimer of IL1RL2 and IL1RAP; the association is inhibited by IL36RN. The interleukin-1 receptor complex is a heterodimer of IL1R1 and IL1RAP. Associates with IL1R2 to form a non-signaling interleukin-1 receptor complex. Interacts with IL-33-bound IL1RL1 to form the minimal interleukin-33 signaling complex with a 1:1:1 stoichiometry. Interacts with KIT (independently of stimulation with KITLG/SCF). A mast cell-specific KITLG/SCF-induced interleukin-33 signaling complex contains IL1RL1, IL1RAP, KIT and MYD88. Interacts (via the first immunoglobilin domain) with PTPRD (via the third immunoglobilin domain); induces pre- and postsynaptic differentiation of neurons. In terms of tissue distribution, highly expressed in hypothalamus, in the dentate gyrus of hippocampus, cerebral cortex, cerebellum, liver and lung.

It localises to the membrane. The enzyme catalyses NAD(+) + H2O = ADP-D-ribose + nicotinamide + H(+). Functionally, coreceptor for IL1RL2 in the IL-36 signaling system. Coreceptor with IL1R1 in the IL-1 signaling system. Associates with IL1R1 bound to IL1B to form the high affinity interleukin-1 receptor complex which mediates interleukin-1-dependent activation of NF-kappa-B and other pathways. Signaling involves the recruitment of adapter molecules such as TOLLIP, MYD88, and IRAK1 or IRAK2 via the respective TIR domains of the receptor/coreceptor subunits. Recruits TOLLIP to the signaling complex. Does not bind to interleukin-1 alone; binding of IL1RN to IL1R1, prevents its association with IL1R1 to form a signaling complex. The cellular response is modulated through a non-signaling association with the membrane IL1R2 decoy receptor. Coreceptor for IL1RL1 in the IL-33 signaling system. Can bidirectionally induce pre- and postsynaptic differentiation of neurons by trans-synaptically binding to PTPRD. May play a role in IL1B-mediated costimulation of IFNG production from T-helper 1 (Th1) cells. The protein is Interleukin-1 receptor accessory protein (Il1rap) of Rattus norvegicus (Rat).